Reading from the N-terminus, the 138-residue chain is ATP synthase epsilon chain (138 aa).

The protein belongs to the ATPase epsilon chain family. As to quaternary structure, F-type ATPases have 2 components, CF(1) - the catalytic core - and CF(0) - the membrane proton channel. CF(1) has five subunits: alpha(3), beta(3), gamma(1), delta(1), epsilon(1). CF(0) has three main subunits: a, b and c.

It localises to the cell membrane. In terms of biological role, produces ATP from ADP in the presence of a proton gradient across the membrane. This chain is ATP synthase epsilon chain, found in Streptococcus pyogenes serotype M3 (strain ATCC BAA-595 / MGAS315).